A 387-amino-acid polypeptide reads, in one-letter code: ATP-dependent Clp protease proteolytic subunit-related protein 1, chloroplastic (387 aa).

A chloroplast-targeting transit peptide spans 1 to 41 (MATALVSPLTSQLNHEAVCSKFVLPKSPFMSGSKLFSSNMP). Over residues 355–365 (QDSSFEKRDYD) the composition is skewed to basic and acidic residues. Positions 355-387 (QDSSFEKRDYDGTLAQRAMRPGGGSPAAPAGLR) are disordered.

Belongs to the peptidase S14 family. Component of the chloroplastic Clp protease core complex which consist of at least 16 proteins: CLPP4 (3 copies), CLPP5 (3 copies), CLPR4 (2 copies), ClpP1 (1 copy), CLPP6 (1 copy), CLPR2 (1 copy), CLPT1 (1 copy), CLPT2 (1 copy) and 3 copies of CLPP3 and/or CLPR1 and/or CLPR3. The core complex is organized in two heptameric rings, one containing CLPP3,4,5,6 in a 1:2:3:1 ratio and the other CLPP1 and CLPR1,2,3,4 in a 3:1:1:1:1 ratio.

Its subcellular location is the plastid. It localises to the chloroplast stroma. Its function is as follows. Required for chloroplast development and differentiation. This Arabidopsis thaliana (Mouse-ear cress) protein is ATP-dependent Clp protease proteolytic subunit-related protein 1, chloroplastic.